The chain runs to 213 residues: uncharacterized protein (213 aa).

2 coiled-coil regions span residues 54–78 and 108–151; these read KEQTKLNNLIEKGKQMLKEYNNLKL and VKDV…STSK. The segment covering 122–142 has biased composition (basic and acidic residues); the sequence is IEKEKEEEKAAKKAEKAEEKK. The segment at 122-213 is disordered; the sequence is IEKEKEEEKA…FGGKPTGQIW (92 aa). Residues 146–188 are compositionally biased toward low complexity; the sequence is KNSTSKSGSKSSKSSSGSSKSSSKSSKSSKSSSGSSKSSSKSS. Positions 189-199 are enriched in basic residues; the sequence is KNSKKSSKKSN.

The protein belongs to the mimivirus R546 family.

This is an uncharacterized protein from Acanthamoeba polyphaga (Amoeba).